Here is a 160-residue protein sequence, read N- to C-terminus: Transcription elongation factor GreA (160 aa).

Residues 4 to 70 (QKQYPMTQEG…IEQDIQRIEH (67 aa)) are a coiled coil.

It belongs to the GreA/GreB family.

In terms of biological role, necessary for efficient RNA polymerase transcription elongation past template-encoded arresting sites. The arresting sites in DNA have the property of trapping a certain fraction of elongating RNA polymerases that pass through, resulting in locked ternary complexes. Cleavage of the nascent transcript by cleavage factors such as GreA or GreB allows the resumption of elongation from the new 3'terminus. GreA releases sequences of 2 to 3 nucleotides. The protein is Transcription elongation factor GreA of Staphylococcus carnosus (strain TM300).